Reading from the N-terminus, the 82-residue chain is Turripeptide IX-07 (82 aa).

The N-terminal stretch at 1–21 is a signal peptide; sequence MGFYMLLTVALLLTSLMNVEA. The propeptide occupies 22-39; the sequence is TPVNQAERSALEKSGLGN. Cystine bridges form between Cys-48-Cys-70, Cys-55-Cys-74, and Cys-60-Cys-81.

In terms of tissue distribution, expressed by the venom duct.

It localises to the secreted. The protein is Turripeptide IX-07 of Gemmula speciosa (Splendid gem-turris).